Reading from the N-terminus, the 330-residue chain is MRVTMSLEALTTEALAAIAAAQDLAALDQVRVLFTGKKSQLAEQSKALGKMDPEQRKVQGAAIHAVREAINAALTERQTALQQAALQQKLASETIDITLPGRGQHMGSIHPVTQVQERICQFFTKAGFSVATGPEVEDDYHNFEALNIPGHHPARAMHDTFYFDVNHLLRTHTSGVQIRTMETTQPPIRIVCPGRVYRCDSDQTHSPMFHQIEGLYVAENTSFAELKGLLINLLNEFFEKDLKVRFRPSYFPFTEPSAEVDIMDERGRWLEVLGCGMVHPNVLRAAGIDPEKYKGFAFGLGVERFAMLRYGINDLRMFYQNDVRFLRQFA.

Glutamate 255 is a Mg(2+) binding site.

It belongs to the class-II aminoacyl-tRNA synthetase family. Phe-tRNA synthetase alpha subunit type 1 subfamily. As to quaternary structure, tetramer of two alpha and two beta subunits. Mg(2+) is required as a cofactor.

Its subcellular location is the cytoplasm. It carries out the reaction tRNA(Phe) + L-phenylalanine + ATP = L-phenylalanyl-tRNA(Phe) + AMP + diphosphate + H(+). The chain is Phenylalanine--tRNA ligase alpha subunit from Acinetobacter baylyi (strain ATCC 33305 / BD413 / ADP1).